A 151-amino-acid chain; its full sequence is Neuroglobin (151 aa).

In terms of domain architecture, Globin spans 1–149; that stretch reads MERPEPELIR…VVQAMSRGWD (149 aa). The cysteines at positions 46 and 55 are disulfide-linked. Heme b-binding residues include histidine 64 and histidine 96.

It belongs to the globin family. In terms of assembly, monomer. Homodimer and homotetramer; disulfide-linked. Mainly monomeric but also detected as part of homodimers and homotetramers. Interacts with 14-3-3 proteins; regulates the phosphorylation of NGB. Could interact (ferrous form) with G-alpha(i) proteins (GTP-bound form). Post-translationally, phosphorylated during hypoxia by ERK1/ERK2. Phosphorylation regulates the heme pocket hexacoordination preventing the association of His-64 with the heme metal center. Thereby, promotes the access of dioxygen and nitrite to the heme and stimulates the nitrite reductase activity. Phosphorylation during hypoxia is stabilized by 14-3-3 proteins. An intramolecular Cys-46/Cys-55 disulfide bond, not necessarily present in orthologs, regulates the heme pocket hexacoordination preventing the association of His-64 with the heme metal center. Thereby, promotes the access of dioxygen and nitrite to the heme and stimulates the nitrite reductase activity. In terms of tissue distribution, predominantly expressed in brain, the strongest expression is seen in the frontal lobe, the subthalamic nucleus and the thalamus.

It localises to the cytoplasm. Its subcellular location is the cytosol. It is found in the mitochondrion matrix. The catalysed reaction is Fe(III)-heme b-[protein] + nitric oxide + H2O = Fe(II)-heme b-[protein] + nitrite + 2 H(+). Functionally, monomeric globin with a bis-histidyl six-coordinate heme-iron atom through which it can bind dioxygen, carbon monoxide and nitric oxide. Could help transport oxygen and increase its availability to the metabolically active neuronal tissues, though its low quantity in tissues as well as its high affinity for dioxygen, which may limit its oxygen-releasing ability, argue against it. The ferrous/deoxygenated form exhibits a nitrite reductase activity and it could produce nitric oxide which in turn inhibits cellular respiration in response to hypoxia. In its ferrous/deoxygenated state, it may also exhibit GDI (Guanine nucleotide Dissociation Inhibitor) activity toward heterotrimeric G-alpha proteins, thereby regulating signal transduction to facilitate neuroprotective responses in the wake of hypoxia and associated oxidative stress. This chain is Neuroglobin, found in Homo sapiens (Human).